A 627-amino-acid polypeptide reads, in one-letter code: uncharacterized protein (627 aa).

7 disordered regions span residues 57–82 (EDAM…QGED), 96–121 (PEAQ…APPG), 160–184 (GCSH…DAAY), 198–232 (AQSQ…CPSG), 247–277 (SHDA…RGAP), 335–358 (RQAG…EAAY), and 449–579 (VFDV…PPLS). Positions 169 to 183 (SSSDQAADAPAGDAA) are enriched in low complexity. The span at 336–357 (QAGAEPAQAPATAPAPEGTEAA) shows a compositional bias: low complexity. Residues 450–464 (FDVKEQGAHADRDAA) show a composition bias toward basic and acidic residues.

This is an uncharacterized protein from Treponema pallidum (strain Nichols).